The following is a 62-amino-acid chain: MARYRHSRSRSRSRYRRRRRRRSRYRSRRRRYRGRRRRRSRRGRRRRGYSCRRYSRRRRRRY.

Residues 1–62 (MARYRHSRSR…RYSRRRRRRY (62 aa)) are disordered.

This sequence belongs to the protamine P1 family. Testis.

It is found in the nucleus. Its subcellular location is the chromosome. Its function is as follows. Protamines substitute for histones in the chromatin of sperm during the haploid phase of spermatogenesis. They compact sperm DNA into a highly condensed, stable and inactive complex. In Thylogale stigmatica (Red-legged pademelon), this protein is Sperm protamine P1 (PRM1).